A 210-amino-acid chain; its full sequence is Holliday junction resolvase RecU (210 aa).

Residues 1–34 (MAFHYPNGQPYSNHETKQPKKQGRHTSPTTLYGK) are disordered. Mg(2+)-binding residues include T90, D92, E105, and Q124.

This sequence belongs to the RecU family. It depends on Mg(2+) as a cofactor.

The protein resides in the cytoplasm. It carries out the reaction Endonucleolytic cleavage at a junction such as a reciprocal single-stranded crossover between two homologous DNA duplexes (Holliday junction).. Functionally, endonuclease that resolves Holliday junction intermediates in genetic recombination. Cleaves mobile four-strand junctions by introducing symmetrical nicks in paired strands. Promotes annealing of linear ssDNA with homologous dsDNA. Required for DNA repair, homologous recombination and chromosome segregation. The polypeptide is Holliday junction resolvase RecU (Latilactobacillus sakei subsp. sakei (strain 23K) (Lactobacillus sakei subsp. sakei)).